The primary structure comprises 375 residues: 23S rRNA (uracil(747)-C(5))-methyltransferase RlmC (375 aa).

Positions 3, 11, 14, and 87 each coordinate [4Fe-4S] cluster. The S-adenosyl-L-methionine site is built by Gln212, Phe241, Glu262, and Asn307. The active-site Nucleophile is the Cys334.

Belongs to the class I-like SAM-binding methyltransferase superfamily. RNA M5U methyltransferase family. RlmC subfamily.

The catalysed reaction is uridine(747) in 23S rRNA + S-adenosyl-L-methionine = 5-methyluridine(747) in 23S rRNA + S-adenosyl-L-homocysteine + H(+). In terms of biological role, catalyzes the formation of 5-methyl-uridine at position 747 (m5U747) in 23S rRNA. The polypeptide is 23S rRNA (uracil(747)-C(5))-methyltransferase RlmC (Escherichia coli O7:K1 (strain IAI39 / ExPEC)).